The sequence spans 61 residues: Short neurotoxin 2 (61 aa).

Disulfide bonds link Cys-3–Cys-23, Cys-17–Cys-40, Cys-42–Cys-53, and Cys-54–Cys-59.

Belongs to the three-finger toxin family. Short-chain subfamily. Type I alpha-neurotoxin sub-subfamily. As to expression, expressed by the venom gland.

It localises to the secreted. In terms of biological role, binds to muscle nicotinic acetylcholine receptor (nAChR) and inhibit acetylcholine from binding to the receptor, thereby impairing neuromuscular transmission. This chain is Short neurotoxin 2, found in Naja haje haje (Egyptian cobra).